Reading from the N-terminus, the 335-residue chain is Transcription factor IIIA (335 aa).

9 C2H2-type zinc fingers span residues Tyr13 to His37, Phe43 to His67, Cys73 to His98, Tyr105 to His129, Phe135 to His159, Tyr162 to His188, Thr192 to His214, Tyr221 to His246, and Phe252 to His276. Residues Leu269–Lys280 show a composition bias toward basic and acidic residues. The disordered stretch occupies residues Leu269–Lys335. Residues Lys281–Leu292 are compositionally biased toward basic residues.

It is found in the nucleus. In terms of biological role, involved in ribosomal large subunit biogenesis. Interacts with the internal control region (ICR) of approximately 50 bases within the 5S RNA genes, is required for correct transcription of these genes by RNA polymerase III. Also binds the transcribed 5S RNA's. This is Transcription factor IIIA (gtf3a) from Lithobates pipiens (Northern leopard frog).